A 326-amino-acid chain; its full sequence is uncharacterized protein (326 aa).

Residue Ser132 coordinates substrate. Tyr157 functions as the Proton acceptor in the catalytic mechanism.

The protein belongs to the NAD(P)-dependent epimerase/dehydratase family. dTDP-glucose dehydratase subfamily.

This is an uncharacterized protein from Methanocaldococcus jannaschii (strain ATCC 43067 / DSM 2661 / JAL-1 / JCM 10045 / NBRC 100440) (Methanococcus jannaschii).